Here is a 443-residue protein sequence, read N- to C-terminus: Threonine/serine transporter TdcC (443 aa).

The next 11 membrane-spanning stretches (helical) occupy residues T22 to I42, A44 to F64, G97 to V117, F140 to M160, V163 to I183, I207 to I227, M261 to A281, F311 to F331, L366 to L386, I389 to I409, and D423 to F443.

Belongs to the amino acid/polyamine transporter 2 family. SdaC/TdcC subfamily.

Its subcellular location is the cell inner membrane. The catalysed reaction is L-threonine(in) + H(+)(in) = L-threonine(out) + H(+)(out). It catalyses the reaction L-serine(in) + H(+)(in) = L-serine(out) + H(+)(out). Functionally, involved in the import of threonine and serine into the cell, with the concomitant import of a proton (symport system). The protein is Threonine/serine transporter TdcC of Shigella flexneri serotype 5b (strain 8401).